A 1576-amino-acid polypeptide reads, in one-letter code: Pentafunctional AROM polypeptide (1576 aa).

Positions 1–387 (MGSTTFENPT…YEPKASVVED (387 aa)) are 3-dehydroquinate synthase. Residues 49–51 (DTN), 86–89 (ENSK), 117–119 (GGV), and aspartate 122 each bind NAD(+). Arginine 133 provides a ligand contact to 7-phospho-2-dehydro-3-deoxy-D-arabino-heptonate. Position 142-143 (142-143 (TT)) interacts with NAD(+). Aspartate 149 and lysine 155 together coordinate 7-phospho-2-dehydro-3-deoxy-D-arabino-heptonate. Lysine 164 lines the NAD(+) pocket. Residue asparagine 165 participates in 7-phospho-2-dehydro-3-deoxy-D-arabino-heptonate binding. NAD(+) is bound by residues 182 to 185 (FLET) and asparagine 193. Glutamate 197 lines the Zn(2+) pocket. 7-phospho-2-dehydro-3-deoxy-D-arabino-heptonate is bound by residues 197 to 200 (EVVK) and lysine 253. The active-site Proton acceptor; for 3-dehydroquinate synthase activity is glutamate 263. 7-phospho-2-dehydro-3-deoxy-D-arabino-heptonate-binding positions include 267–271 (RNILN) and histidine 274. Histidine 274 is a binding site for Zn(2+). The active-site Proton acceptor; for 3-dehydroquinate synthase activity is the histidine 278. The 7-phospho-2-dehydro-3-deoxy-D-arabino-heptonate site is built by histidine 290 and lysine 359. Histidine 290 is a Zn(2+) binding site. The tract at residues 400–841 (VRPSVPETLN…WDILSKSFQV (442 aa)) is EPSP synthase. The active-site For EPSP synthase activity is the cysteine 823. Residues 863–1055 (DKSIFIIGMR…RNKPQSFFVS (193 aa)) form a shikimate kinase region. 870 to 877 (GMRGAGKT) is an ATP binding site. The segment at 1056–1276 (LTMPDISGAA…AAPGQLSAAE (221 aa)) is 3-dehydroquinase. Histidine 1179 serves as the catalytic Proton acceptor; for 3-dehydroquinate dehydratase activity. The active-site Schiff-base intermediate with substrate; for 3-dehydroquinate dehydratase activity is the lysine 1207. The interval 1289–1576 (PKSFYLFGTP…RAAVMGDSTA (288 aa)) is shikimate dehydrogenase.

The protein in the N-terminal section; belongs to the sugar phosphate cyclases superfamily. Dehydroquinate synthase family. It in the 2nd section; belongs to the EPSP synthase family. This sequence in the 3rd section; belongs to the shikimate kinase family. In the 4th section; belongs to the type-I 3-dehydroquinase family. The protein in the C-terminal section; belongs to the shikimate dehydrogenase family. In terms of assembly, homodimer. Requires Zn(2+) as cofactor.

It is found in the cytoplasm. It catalyses the reaction 7-phospho-2-dehydro-3-deoxy-D-arabino-heptonate = 3-dehydroquinate + phosphate. The catalysed reaction is 3-dehydroquinate = 3-dehydroshikimate + H2O. It carries out the reaction shikimate + NADP(+) = 3-dehydroshikimate + NADPH + H(+). The enzyme catalyses shikimate + ATP = 3-phosphoshikimate + ADP + H(+). It catalyses the reaction 3-phosphoshikimate + phosphoenolpyruvate = 5-O-(1-carboxyvinyl)-3-phosphoshikimate + phosphate. It functions in the pathway metabolic intermediate biosynthesis; chorismate biosynthesis; chorismate from D-erythrose 4-phosphate and phosphoenolpyruvate: step 2/7. The protein operates within metabolic intermediate biosynthesis; chorismate biosynthesis; chorismate from D-erythrose 4-phosphate and phosphoenolpyruvate: step 3/7. It participates in metabolic intermediate biosynthesis; chorismate biosynthesis; chorismate from D-erythrose 4-phosphate and phosphoenolpyruvate: step 4/7. Its pathway is metabolic intermediate biosynthesis; chorismate biosynthesis; chorismate from D-erythrose 4-phosphate and phosphoenolpyruvate: step 5/7. It functions in the pathway metabolic intermediate biosynthesis; chorismate biosynthesis; chorismate from D-erythrose 4-phosphate and phosphoenolpyruvate: step 6/7. Functionally, the AROM polypeptide catalyzes 5 consecutive enzymatic reactions in prechorismate polyaromatic amino acid biosynthesis. This chain is Pentafunctional AROM polypeptide, found in Sclerotinia sclerotiorum (strain ATCC 18683 / 1980 / Ss-1) (White mold).